A 148-amino-acid polypeptide reads, in one-letter code: Proteasome chaperone 4 (148 aa).

This sequence belongs to the PSMG4 family. As to quaternary structure, component of the 20S proteasome chaperone. Forms a heterodimer with IRC25 that binds to proteasome precursors. Interacts with POP2.

It localises to the cytoplasm. Its function is as follows. Involved in 20S proteasome assembly, facilitating the alpha-ring formation. Involved in maintenance of telomere length. This Saccharomyces cerevisiae (strain ATCC 204508 / S288c) (Baker's yeast) protein is Proteasome chaperone 4 (POC4).